The following is a 719-amino-acid chain: Polyphosphate kinase (719 aa).

Position 54 (asparagine 54) interacts with ATP. Residues arginine 379 and arginine 409 each coordinate Mg(2+). The PLD phosphodiesterase domain maps to threonine 434 to threonine 468. The active-site Phosphohistidine intermediate is histidine 439. 3 residues coordinate ATP: tyrosine 472, arginine 568, and histidine 596.

Belongs to the polyphosphate kinase 1 (PPK1) family. Mg(2+) serves as cofactor. Post-translationally, an intermediate of this reaction is the autophosphorylated ppk in which a phosphate is covalently linked to a histidine residue through a N-P bond.

The enzyme catalyses [phosphate](n) + ATP = [phosphate](n+1) + ADP. Functionally, catalyzes the reversible transfer of the terminal phosphate of ATP to form a long-chain polyphosphate (polyP). The protein is Polyphosphate kinase of Staphylococcus saprophyticus subsp. saprophyticus (strain ATCC 15305 / DSM 20229 / NCIMB 8711 / NCTC 7292 / S-41).